A 426-amino-acid polypeptide reads, in one-letter code: Fc receptor-like B (426 aa).

Residues 1 to 17 form the signal peptide; sequence MWPLTALLLLVPSSGQA. 2 consecutive Ig-like C2-type domains span residues 23–101 and 103–189; these read PILS…LSVS and DWLI…VAVT. 2 cysteine pairs are disulfide-bonded: C44-C85 and C124-C168. N-linked (GlcNAc...) asparagine glycosylation occurs at N152. The interval 400–426 is disordered; sequence ELRGTPETPTSHFAVSPGTPETTPVES. Residues 406–426 are compositionally biased toward polar residues; that stretch reads ETPTSHFAVSPGTPETTPVES.

Expressed at low levels. Expressed in B-lymphocytes. Detected in tonsil, lung, kidney, spleen and placenta. Expressed by a small subset of germinal center B-cells in tonsils and by melanocytes (at protein level).

The protein localises to the cytoplasm. It is found in the endoplasmic reticulum. This Homo sapiens (Human) protein is Fc receptor-like B (FCRLB).